Here is a 240-residue protein sequence, read N- to C-terminus: 2,3,4,5-tetrahydropyridine-2,6-dicarboxylate N-acetyltransferase (240 aa).

The protein belongs to the transferase hexapeptide repeat family. DapH subfamily.

It catalyses the reaction (S)-2,3,4,5-tetrahydrodipicolinate + acetyl-CoA + H2O = L-2-acetamido-6-oxoheptanedioate + CoA. Its pathway is amino-acid biosynthesis; L-lysine biosynthesis via DAP pathway; LL-2,6-diaminopimelate from (S)-tetrahydrodipicolinate (acetylase route): step 1/3. Its function is as follows. Catalyzes the transfer of an acetyl group from acetyl-CoA to tetrahydrodipicolinate. The polypeptide is 2,3,4,5-tetrahydropyridine-2,6-dicarboxylate N-acetyltransferase (Bacillus cereus (strain AH187)).